We begin with the raw amino-acid sequence, 134 residues long: Homeobox protein ceh-5 (134 aa).

Residues 35–94 (PKRPRTVFTDEQLEKLEESFNTSGYLSGSTRAKLAESLGLSDNQVKVWFQNRRTKQKKID) constitute a DNA-binding region (homeobox).

The protein localises to the nucleus. The chain is Homeobox protein ceh-5 (ceh-5) from Caenorhabditis elegans.